Here is a 112-residue protein sequence, read N- to C-terminus: UPF0102 protein Pmob_0702 (112 aa).

This sequence belongs to the UPF0102 family.

This Petrotoga mobilis (strain DSM 10674 / SJ95) protein is UPF0102 protein Pmob_0702.